The primary structure comprises 461 residues: Glycolipid 2-alpha-mannosyltransferase 2 (461 aa).

Residues 1-12 are Cytoplasmic-facing; that stretch reads MKPSIFYSSRQP. The helical; Signal-anchor for type II membrane protein transmembrane segment at 13-35 threads the bilayer; it reads YLKYLAIILTTITIYVLTHSSYS. A compositionally biased stretch (polar residues) spans 35–52; it reads SADPNINDVTTKPISETV. The tract at residues 35 to 138 is disordered; that stretch reads SADPNINDVT…SSSKDPVKPE (104 aa). Over 36 to 461 the chain is Lumenal; that stretch reads ADPNINDVTT…QKPKEWEKYQ (426 aa). Composition is skewed to low complexity over residues 61-70 and 106-116; these read SSPEQQQQQP and PKSSSSSPQQQ. Basic and acidic residues predominate over residues 117–126; it reads EKQDTKKESE. The active-site Nucleophile is glutamate 349.

This sequence belongs to the glycosyltransferase 15 family.

It is found in the golgi apparatus membrane. Involved in O-glycosylation of cell wall and secreted proteins. Transfers an alpha-D-mannosyl residue from GDP-mannose into lipid-linked oligosaccharide, forming an alpha-(1-&gt;2)-D-mannosyl-D-mannose linkage. Mainly responsible for the addition of the third mannose residue in an O-linked mannose pentamer. Can also substitute for MNT1 by adding the second mannose residue. Important for adherence to host surfaces and for virulence. This Candida albicans (strain SC5314 / ATCC MYA-2876) (Yeast) protein is Glycolipid 2-alpha-mannosyltransferase 2 (MNT2).